Reading from the N-terminus, the 235-residue chain is MSNVLLSPNGYVFASPKPLGRFINSKSGGRKLFFSVVRASSDDADCNAEECAPEKEVGTVSMEWLAGEKTKVVGTFPPRKPRGWTGYVEKDTAGQTNVYSIEPAVYVAESAISSGTAGSSADGAENTAAIVAGIALIAVAAASSILLQVGKDAPTRPKAVDYSGPSLSYYINKFKPSEIVQPSTPSVTEAPPVAELETSLPETPSVAQQETSLPETMASEAQPEASSVPTTSSTS.

Residues 127-147 form a helical membrane-spanning segment; that stretch reads TAAIVAGIALIAVAAASSILL. The interval 181-235 is disordered; that stretch reads QPSTPSVTEAPPVAELETSLPETPSVAQQETSLPETMASEAQPEASSVPTTSSTS. Polar residues-rich tracts occupy residues 200–214 and 224–235; these read LPET…TSLP and EASSVPTTSSTS.

In terms of assembly, interacts with psbA, psbB, psbC and psbD.

Its subcellular location is the plastid. The protein localises to the chloroplast thylakoid membrane. In terms of biological role, interacts with photosystem II (PSII) core complexes and participates in the maintenance of normal PSII activity under photoinhibitory stress. May protect against photodamage or stabilize PSII under high-light stress. Participates in the maintainance of proper PSII function under high-light stress by protecting PSII from photooxidative damage. In Arabidopsis thaliana (Mouse-ear cress), this protein is Protein MAINTENANCE OF PSII UNDER HIGH LIGHT 1.